We begin with the raw amino-acid sequence, 124 residues long: Glutaredoxin-2 (124 aa).

Cys-13 and Cys-16 form a disulfide bridge.

This sequence belongs to the glutaredoxin family. Homodimer.

The protein resides in the host cytoplasm. Its function is as follows. Glutaredoxin necessary for virion morphogenesis and virus replication. Functions as a thiol-disulfide transfer protein between membrane-associated OPG128 and substrates OPG095 or OPG053. The complete pathway for formation of disulfide bonds in intracellular virion membrane proteins sequentially involves oxidation of OPG072, OPG128 and OPG088. Exhibit thioltransferase and dehydroascorbate reductase activities in vitro. The polypeptide is Glutaredoxin-2 (OPG088) (Mus musculus (Mouse)).